The chain runs to 472 residues: Membrane-bound lytic murein transglycosylase F (472 aa).

Positions 1 to 24 (MRLLVIFLLALLLMACKEAPKPLA) are cleaved as a signal peptide. Residues 25 to 259 (DPRTTKEIIV…HLIDRYYGHA (235 aa)) form a non-LT domain region. An LT domain region spans residues 260–472 (DRLKPVDVTT…NGFGNTLSQE (213 aa)). Glutamate 306 is a catalytic residue.

In the N-terminal section; belongs to the bacterial solute-binding protein 3 family. It in the C-terminal section; belongs to the transglycosylase Slt family.

The protein localises to the cell outer membrane. It catalyses the reaction Exolytic cleavage of the (1-&gt;4)-beta-glycosidic linkage between N-acetylmuramic acid (MurNAc) and N-acetylglucosamine (GlcNAc) residues in peptidoglycan, from either the reducing or the non-reducing ends of the peptidoglycan chains, with concomitant formation of a 1,6-anhydrobond in the MurNAc residue.. Murein-degrading enzyme that degrades murein glycan strands and insoluble, high-molecular weight murein sacculi, with the concomitant formation of a 1,6-anhydromuramoyl product. Lytic transglycosylases (LTs) play an integral role in the metabolism of the peptidoglycan (PG) sacculus. Their lytic action creates space within the PG sacculus to allow for its expansion as well as for the insertion of various structures such as secretion systems and flagella. The polypeptide is Membrane-bound lytic murein transglycosylase F (Methylobacillus flagellatus (strain ATCC 51484 / DSM 6875 / VKM B-1610 / KT)).